A 324-amino-acid chain; its full sequence is Cuticle collagen lon-3 (324 aa).

The signal sequence occupies residues Met1 to Ser30. Positions Val119–Tyr324 are disordered. 3 triple-helical region regions span residues Gly129 to Asp152, Gly170 to Asp229, and Gly235 to Pro294. Low complexity-rich tracts occupy residues Pro136–Gln151, Pro168–Pro181, Pro210–Ser223, Gly235–Gln246, and Glu261–Pro273. Over residues Lys296–Asn311 the composition is skewed to basic and acidic residues. Residues Arg314–Tyr324 show a composition bias toward basic residues.

It belongs to the cuticular collagen family. As to quaternary structure, collagen polypeptide chains are complexed within the cuticle by disulfide bonds and other types of covalent cross-links.

Nematode cuticles are composed largely of collagen-like proteins. The cuticle functions both as an exoskeleton and as a barrier to protect the worm from its environment. Dose-dependent regulator of body length and shape. The protein is Cuticle collagen lon-3 (lon-3) of Caenorhabditis elegans.